The chain runs to 510 residues: Probable cytosol aminopeptidase (510 aa).

The Mn(2+) site is built by Lys272 and Asp277. Lys284 is a catalytic residue. Residues Asp296, Asp355, and Glu357 each coordinate Mn(2+). Arg359 is an active-site residue.

The protein belongs to the peptidase M17 family. Mn(2+) serves as cofactor.

The protein localises to the cytoplasm. It catalyses the reaction Release of an N-terminal amino acid, Xaa-|-Yaa-, in which Xaa is preferably Leu, but may be other amino acids including Pro although not Arg or Lys, and Yaa may be Pro. Amino acid amides and methyl esters are also readily hydrolyzed, but rates on arylamides are exceedingly low.. The catalysed reaction is Release of an N-terminal amino acid, preferentially leucine, but not glutamic or aspartic acids.. In terms of biological role, presumably involved in the processing and regular turnover of intracellular proteins. Catalyzes the removal of unsubstituted N-terminal amino acids from various peptides. The polypeptide is Probable cytosol aminopeptidase (Synechococcus sp. (strain JA-2-3B'a(2-13)) (Cyanobacteria bacterium Yellowstone B-Prime)).